The chain runs to 159 residues: Cytochrome c-type biogenesis protein CcmE (159 aa).

Over 1–8 the chain is Cytoplasmic; that stretch reads MNIRRKNR. A helical; Signal-anchor for type II membrane protein transmembrane segment spans residues 9–29; sequence LWIACAVLAGLALTIGLVLYA. Residues 30–159 are Periplasmic-facing; it reads LRSNIDLFYT…PASVYKDPAS (130 aa). Heme contacts are provided by H130 and Y134. Basic and acidic residues predominate over residues 132–147; the sequence is ENYTPPEVEKAMEANH. Residues 132–159 form a disordered region; it reads ENYTPPEVEKAMEANHRRPASVYKDPAS.

This sequence belongs to the CcmE/CycJ family.

Its subcellular location is the cell inner membrane. Heme chaperone required for the biogenesis of c-type cytochromes. Transiently binds heme delivered by CcmC and transfers the heme to apo-cytochromes in a process facilitated by CcmF and CcmH. This chain is Cytochrome c-type biogenesis protein CcmE, found in Escherichia coli (strain 55989 / EAEC).